The sequence spans 550 residues: Zinc finger protein squeeze (550 aa).

Positions 73 to 105 (QQQQQQQQQEMLQQQQQHQAHQEQQQQQQQQQQ) are enriched in low complexity. Residues 73-179 (QQQQQQQQQE…GGGGGDGDQS (107 aa)) are disordered. Residues 106 to 117 (QHHHQQQQHHLK) show a composition bias toward basic residues. The span at 141-156 (RSPQRPLMSSGSNASS) shows a compositional bias: polar residues. Residues 164–176 (SGGGPGGGGGGDG) are compositionally biased toward gly residues. C2H2-type zinc fingers lie at residues 182–204 (YKCA…TRIH), 210–232 (YRCE…IRTH), 238–262 (YKCR…SRCH), 268–290 (FKCN…IPKH), and 299–321 (HICN…LQKH). The interval 399 to 485 (LQQHQQQQQQ…VPPSHLQQHR (87 aa)) is disordered. A compositionally biased stretch (low complexity) spans 400–416 (QQHQQQQQQQQQDMLQQ). Phosphothreonine is present on Thr-424. Phosphoserine occurs at positions 428 and 430. Over residues 444–460 (QTTPQHHLQQQQQQQQP) the composition is skewed to low complexity. A phosphotyrosine mark is found at Tyr-494 and Tyr-496.

It belongs to the krueppel C2H2-type zinc-finger protein family. In terms of assembly, interacts with nab; which acts as a coactivator. Interacts with ap.

The protein resides in the nucleus. Transcription factor involved in neuronal fate specification. First required in embryonic CNS development to define the number of cells that express apterous (ap) in the ap thoracic cluster of interneurons. Later on, it plays a central role in the combinatorial code of transcription factors that specifies the fate of the Tv neuron in the ap cluster by participating in the transcription regulation of FMRFa in Tv cells. Also required for projection neuron dendritic targeting. The polypeptide is Zinc finger protein squeeze (sqz) (Drosophila pseudoobscura pseudoobscura (Fruit fly)).